The sequence spans 148 residues: Thiol-disulfide oxidoreductase YkuV (148 aa).

The region spanning 2-145 (KLRQPMPELT…LEKRVNRVLA (144 aa)) is the Thioredoxin domain. A disulfide bridge links cysteine 41 with cysteine 44.

In terms of assembly, monomer.

The protein localises to the cytoplasm. Its function is as follows. Participates in various redox reactions through the reversible oxidation of its active center dithiol to a disulfide and catalyzes dithiol-disulfide exchange reactions. The sequence is that of Thiol-disulfide oxidoreductase YkuV (ykuV) from Bacillus subtilis (strain 168).